Here is a 520-residue protein sequence, read N- to C-terminus: ATP-dependent clpX-like chaperone, mitochondrial (520 aa).

A mitochondrion-targeting transit peptide spans 1–13 (MLKSASQNFFRAY). 140–147 (GPSGSGKT) contributes to the ATP binding site.

The protein belongs to the ClpX chaperone family. Homohexamer that forms a ring structure; this hexamerization requires ATP binding. Interacts with HEM1.

The protein resides in the mitochondrion inner membrane. Its function is as follows. ATP-dependent unfoldase that stimulates the incorporation of the pyridoxal phosphate cofactor into 5-aminolevulinate synthase (HEM1), thereby activating 5-aminolevulinate (ALA) synthesis, the first step in heme biosynthesis. Up-regulates heme biosynthesis. The sequence is that of ATP-dependent clpX-like chaperone, mitochondrial from Saccharomyces cerevisiae (strain ATCC 204508 / S288c) (Baker's yeast).